The primary structure comprises 118 residues: UPF0251 protein TTE1845 (118 aa).

Belongs to the UPF0251 family.

The polypeptide is UPF0251 protein TTE1845 (Caldanaerobacter subterraneus subsp. tengcongensis (strain DSM 15242 / JCM 11007 / NBRC 100824 / MB4) (Thermoanaerobacter tengcongensis)).